The following is a 632-amino-acid chain: 1,4-alpha-glucan branching enzyme GlgB (632 aa).

Asp-310 functions as the Nucleophile in the catalytic mechanism. The Proton donor role is filled by Glu-363.

It belongs to the glycosyl hydrolase 13 family. GlgB subfamily. Monomer.

It carries out the reaction Transfers a segment of a (1-&gt;4)-alpha-D-glucan chain to a primary hydroxy group in a similar glucan chain.. It participates in glycan biosynthesis; glycogen biosynthesis. Catalyzes the formation of the alpha-1,6-glucosidic linkages in glycogen by scission of a 1,4-alpha-linked oligosaccharide from growing alpha-1,4-glucan chains and the subsequent attachment of the oligosaccharide to the alpha-1,6 position. This is 1,4-alpha-glucan branching enzyme GlgB from Desulfitobacterium hafniense (strain Y51).